The primary structure comprises 402 residues: Nicotinate phosphoribosyltransferase (402 aa).

H224 carries the post-translational modification Phosphohistidine; by autocatalysis.

Belongs to the NAPRTase family. Transiently phosphorylated on a His residue during the reaction cycle. Phosphorylation strongly increases the affinity for substrates and increases the rate of nicotinate D-ribonucleotide production. Dephosphorylation regenerates the low-affinity form of the enzyme, leading to product release.

It catalyses the reaction nicotinate + 5-phospho-alpha-D-ribose 1-diphosphate + ATP + H2O = nicotinate beta-D-ribonucleotide + ADP + phosphate + diphosphate. The protein operates within cofactor biosynthesis; NAD(+) biosynthesis; nicotinate D-ribonucleotide from nicotinate: step 1/1. Functionally, catalyzes the synthesis of beta-nicotinate D-ribonucleotide from nicotinate and 5-phospho-D-ribose 1-phosphate at the expense of ATP. The chain is Nicotinate phosphoribosyltransferase from Neisseria gonorrhoeae (strain ATCC 700825 / FA 1090).